The primary structure comprises 525 residues: GMP synthase [glutamine-hydrolyzing] (525 aa).

One can recognise a Glutamine amidotransferase type-1 domain in the interval 9–207 (RILILDFGSQ…VLQLCACEKL (199 aa)). Cysteine 86 functions as the Nucleophile in the catalytic mechanism. Active-site residues include histidine 181 and glutamate 183. Residues 208–400 (WTPANIVEDA…LGLPYDMVYR (193 aa)) form the GMPS ATP-PPase domain. 235–241 (SGGVDSS) provides a ligand contact to ATP.

Homodimer.

The enzyme catalyses XMP + L-glutamine + ATP + H2O = GMP + L-glutamate + AMP + diphosphate + 2 H(+). Its pathway is purine metabolism; GMP biosynthesis; GMP from XMP (L-Gln route): step 1/1. Catalyzes the synthesis of GMP from XMP. The polypeptide is GMP synthase [glutamine-hydrolyzing] (Cellvibrio japonicus (strain Ueda107) (Pseudomonas fluorescens subsp. cellulosa)).